The sequence spans 371 residues: 2-aminoethylphosphonate--pyruvate transaminase (371 aa).

At Lys198 the chain carries N6-(pyridoxal phosphate)lysine.

It belongs to the class-V pyridoxal-phosphate-dependent aminotransferase family. PhnW subfamily. Homodimer. It depends on pyridoxal 5'-phosphate as a cofactor.

It carries out the reaction (2-aminoethyl)phosphonate + pyruvate = phosphonoacetaldehyde + L-alanine. Functionally, involved in phosphonate degradation. The sequence is that of 2-aminoethylphosphonate--pyruvate transaminase from Syntrophobacter fumaroxidans (strain DSM 10017 / MPOB).